Here is a 293-residue protein sequence, read N- to C-terminus: Notch homolog 2 N-terminal-like protein C (293 aa).

4 EGF-like domains span residues 42-81, 82-120, 123-161, and 162-198; these read PPRMCRDGYEPCVNEGMCVTYHNGTGYCKCPEGFLGEYCQ, HRDPCEKNRCQNGGTCVAQAMLGKATCRCASGFTGEDCQ, TSHPCFVSRPCLNGGTCHMLSRDTYECTCQVGFTGKECQ, and WTDACLSHPCANGSTCTTVANQFSCKCLTGFTGQKCE. 17 disulfide bridges follow: Cys-46/Cys-59, Cys-53/Cys-69, Cys-71/Cys-80, Cys-86/Cys-97, Cys-91/Cys-108, Cys-110/Cys-119, Cys-127/Cys-139, Cys-133/Cys-149, Cys-151/Cys-160, Cys-166/Cys-177, Cys-171/Cys-186, Cys-188/Cys-197, Cys-204/Cys-216, Cys-210/Cys-225, Cys-227/Cys-236, Cys-243/Cys-254, and Cys-248/Cys-264. Residue Asn-64 is glycosylated (N-linked (GlcNAc...) asparagine). The N-linked (GlcNAc...) asparagine glycan is linked to Asn-173. One can recognise an EGF-like 5; calcium-binding domain in the interval 200-237; that stretch reads DVNECDIPGHCQHGGTCLNLPGSYQCQCLQGFTGQYCD. The EGF-like 6 domain occupies 239 to 276; it reads LYVPCAPSPCVNGGTCRQTGDFTFECNCLPETVRRGTE.

Belongs to the NOTCH family. As to quaternary structure, interacts with NOTCH2. Interacts with DLL1; the interaction is direct. As to expression, expressed in radial glia neural stem cells during cortical development.

Its subcellular location is the secreted. In terms of biological role, human-specific protein that promotes neural progenitor proliferation and evolutionary expansion of the brain neocortex by regulating the Notch signaling pathway. Able to promote neural progenitor self-renewal, possibly by down-regulating neuronal differentiation genes, thereby delaying the differentiation of neuronal progenitors and leading to an overall final increase in neuronal production. Acts by enhancing the Notch signaling pathway via two different mechanisms that probably work in parallel to reach the same effect. Enhances Notch signaling pathway in a non-cell-autonomous manner via direct interaction with NOTCH2. Also promotes Notch signaling pathway in a cell-autonomous manner through inhibition of cis DLL1-NOTCH2 interactions, which promotes neuronal differentiation. This Homo sapiens (Human) protein is Notch homolog 2 N-terminal-like protein C.